Consider the following 235-residue polypeptide: Endonuclease V (235 aa).

Mg(2+)-binding residues include Asp-45 and Asp-115.

Belongs to the endonuclease V family. Requires Mg(2+) as cofactor.

It localises to the cytoplasm. It catalyses the reaction Endonucleolytic cleavage at apurinic or apyrimidinic sites to products with a 5'-phosphate.. Functionally, DNA repair enzyme involved in the repair of deaminated bases. Selectively cleaves double-stranded DNA at the second phosphodiester bond 3' to a deoxyinosine leaving behind the intact lesion on the nicked DNA. This is Endonuclease V from Bacillus thuringiensis subsp. konkukian (strain 97-27).